We begin with the raw amino-acid sequence, 1790 residues long: Cytokinesis protein sepA (1790 aa).

2 disordered regions span residues 1 to 275 (MPTS…YLTR) and 328 to 350 (GEQK…GILE). Basic and acidic residues predominate over residues 24 to 35 (ERPVEDRWDAHG). 2 stretches are compositionally biased toward low complexity: residues 39-62 (SLAP…SIQS) and 187-203 (SHHS…SRMS). Positions 205 to 236 (DQASIHSSLSSNTRGSSYISTDGSSRTTLPSH) are enriched in polar residues. The GBD/FH3 domain maps to 274–702 (TRPRDDRVVD…YVAMDRRLPD (429 aa)). The span at 328 to 341 (GEQKRKQKARETHG) shows a compositional bias: basic and acidic residues. A coiled-coil region spans residues 724–811 (AEARRAYDES…QRNELETREL (88 aa)). The FH1 domain occupies 955 to 1136 (DPEQATGLLG…NYLASQGAPS (182 aa)). Residues 975–986 (ADDAKDEGKPTE) show a composition bias toward basic and acidic residues. Disordered stretches follow at residues 975–1119 (ADDA…PPGT), 1465–1484 (NLSD…ITQR), and 1596–1790 (RAAA…PSTS). Pro residues-rich tracts occupy residues 1015-1026 (APPPPPPPPPAH) and 1033-1118 (APPP…PPPG). Positions 1141–1564 (VMSSIRPKKK…TEASLARKRI (424 aa)) constitute an FH2 domain. Residues 1435–1566 (LQKLNVDQLR…ASLARKRINV (132 aa)) adopt a coiled-coil conformation. The region spanning 1581–1613 (SPATSGAMDSLLEKLRAAAPQAKDQRDRRRRAR) is the DAD domain. The segment covering 1608–1620 (RRRRARLKERHQV) has biased composition (basic residues). A compositionally biased stretch (polar residues) spans 1644 to 1661 (SGATDTNATDSSLLSPTI). Basic and acidic residues predominate over residues 1694-1710 (PDPERTRRRRESAEEER). The span at 1720–1746 (GATSGSKDSNDTTPLSPVTEPTSTQGE) shows a compositional bias: polar residues.

The protein belongs to the formin homology family. BNI1 subfamily.

Its function is as follows. Involved in cytokinesis. Overexpression results in growth inhibition. The polypeptide is Cytokinesis protein sepA (sepA) (Emericella nidulans (strain FGSC A4 / ATCC 38163 / CBS 112.46 / NRRL 194 / M139) (Aspergillus nidulans)).